The sequence spans 256 residues: Probable septum site-determining protein MinC (256 aa).

The segment at 105 to 143 (RRGATAKPEPADEAEPPVAAAAAEAVPEPAPELAPSAPT) is disordered. Low complexity predominate over residues 120-142 (PPVAAAAAEAVPEPAPELAPSAP).

This sequence belongs to the MinC family. As to quaternary structure, interacts with MinD and FtsZ.

Cell division inhibitor that blocks the formation of polar Z ring septums. Rapidly oscillates between the poles of the cell to destabilize FtsZ filaments that have formed before they mature into polar Z rings. Prevents FtsZ polymerization. The polypeptide is Probable septum site-determining protein MinC (Burkholderia vietnamiensis (strain G4 / LMG 22486) (Burkholderia cepacia (strain R1808))).